The following is a 696-amino-acid chain: Two-component response regulator ORR22 (696 aa).

Positions 27-142 (RVLAVDDDPV…ELRNIWQHVV (116 aa)) constitute a Response regulatory domain. Asp78 carries the post-translational modification 4-aspartylphosphate. The disordered stretch occupies residues 154–214 (LDFSKECNKP…DYQENDEPSA (61 aa)). A compositionally biased stretch (polar residues) spans 176–185 (TCGSSDQNGR). Over residues 195 to 211 (GEDDDEGDDNDYQENDE) the composition is skewed to acidic residues. Residues 214–273 (AAKKPRVVWSVELHRKFVAAVNQLGIDKAVPKRILELMNVEKLTRENVASHLQKYRLYLK) constitute a DNA-binding region (myb-like GARP).

The protein belongs to the ARR family. Type-B subfamily. Post-translationally, two-component system major event consists of a His-to-Asp phosphorelay between a sensor histidine kinase (HK) and a response regulator (RR). In plants, the His-to-Asp phosphorelay involves an additional intermediate named Histidine-containing phosphotransfer protein (HPt). This multistep phosphorelay consists of a His-Asp-His-Asp sequential transfer of a phosphate group between first a His and an Asp of the HK protein, followed by the transfer to a conserved His of the HPt protein and finally the transfer to an Asp in the receiver domain of the RR protein.

Its subcellular location is the nucleus. Transcriptional activator that binds specific DNA sequence. Functions as a response regulator involved in His-to-Asp phosphorelay signal transduction system. Phosphorylation of the Asp residue in the receiver domain activates the ability of the protein to promote the transcription of target genes. May directly activate some type-A response regulators in response to cytokinins. Functions as a response regulator in response to cytokinins. The chain is Two-component response regulator ORR22 from Oryza sativa subsp. japonica (Rice).